Here is a 198-residue protein sequence, read N- to C-terminus: NAD(P)H dehydrogenase (quinone) (198 aa).

In terms of domain architecture, Flavodoxin-like spans 4 to 189; sequence ILVLYYSMYG…SIARYQGEYV (186 aa). Residues 10–15 and 78–80 contribute to the FMN site; these read SMYGHI and TRF. Position 12 (Tyr12) interacts with NAD(+). Trp98 is a binding site for substrate. Residues 113–118 and His133 contribute to the FMN site; that span reads STGTGG.

The protein belongs to the WrbA family. The cofactor is FMN.

It carries out the reaction a quinone + NADH + H(+) = a quinol + NAD(+). It catalyses the reaction a quinone + NADPH + H(+) = a quinol + NADP(+). In Salmonella paratyphi A (strain ATCC 9150 / SARB42), this protein is NAD(P)H dehydrogenase (quinone).